The following is a 147-amino-acid chain: Ribosome maturation factor RimP (147 aa).

It belongs to the RimP family.

The protein localises to the cytoplasm. In terms of biological role, required for maturation of 30S ribosomal subunits. This chain is Ribosome maturation factor RimP, found in Legionella pneumophila (strain Paris).